Consider the following 316-residue polypeptide: HPr kinase/phosphorylase (316 aa).

Active-site residues include H143 and K164. 158 to 165 (GEAGSGKS) serves as a coordination point for ATP. S165 serves as a coordination point for Mg(2+). D182 (proton acceptor; for phosphorylation activity. Proton donor; for dephosphorylation activity) is an active-site residue. Residues 206–215 (LEVRGLGVLN) are important for the catalytic mechanism of both phosphorylation and dephosphorylation. E207 serves as a coordination point for Mg(2+). R251 is a catalytic residue. The tract at residues 272-277 (PVMPGR) is important for the catalytic mechanism of dephosphorylation.

This sequence belongs to the HPrK/P family. As to quaternary structure, homohexamer. The cofactor is Mg(2+).

The catalysed reaction is [HPr protein]-L-serine + ATP = [HPr protein]-O-phospho-L-serine + ADP + H(+). It catalyses the reaction [HPr protein]-O-phospho-L-serine + phosphate + H(+) = [HPr protein]-L-serine + diphosphate. In terms of biological role, catalyzes the ATP- as well as the pyrophosphate-dependent phosphorylation of a specific serine residue in HPr, a phosphocarrier protein of the phosphoenolpyruvate-dependent sugar phosphotransferase system (PTS). HprK/P also catalyzes the pyrophosphate-producing, inorganic phosphate-dependent dephosphorylation (phosphorolysis) of seryl-phosphorylated HPr (P-Ser-HPr). This is HPr kinase/phosphorylase from Xanthomonas axonopodis pv. citri (strain 306).